We begin with the raw amino-acid sequence, 569 residues long: Carboxylesterase 3 (569 aa).

The N-terminal stretch at Met-1–Gly-24 is a signal peptide. An intrachain disulfide couples Cys-95 to Cys-122. An N-linked (GlcNAc...) asparagine glycan is attached at Asn-103. Ser-227 functions as the Acyl-ester intermediate in the catalytic mechanism. Cys-279 and Cys-290 are disulfide-bonded. Catalysis depends on charge relay system residues Glu-345 and His-458. The Prevents secretion from ER motif lies at Gln-566–Leu-569.

Belongs to the type-B carboxylesterase/lipase family. N-glycosylated.

It localises to the endoplasmic reticulum lumen. It carries out the reaction a carboxylic ester + H2O = an alcohol + a carboxylate + H(+). Its function is as follows. Involved in the detoxification of xenobiotics and in the activation of ester and amide prodrugs. This chain is Carboxylesterase 3 (CES3), found in Pongo abelii (Sumatran orangutan).